We begin with the raw amino-acid sequence, 156 residues long: Ribosomal RNA large subunit methyltransferase H (156 aa).

Residues leucine 73, glycine 104, and leucine 123–leucine 128 contribute to the S-adenosyl-L-methionine site.

The protein belongs to the RNA methyltransferase RlmH family. Homodimer.

Its subcellular location is the cytoplasm. It catalyses the reaction pseudouridine(1915) in 23S rRNA + S-adenosyl-L-methionine = N(3)-methylpseudouridine(1915) in 23S rRNA + S-adenosyl-L-homocysteine + H(+). Functionally, specifically methylates the pseudouridine at position 1915 (m3Psi1915) in 23S rRNA. The sequence is that of Ribosomal RNA large subunit methyltransferase H from Neisseria gonorrhoeae (strain ATCC 700825 / FA 1090).